Here is a 3332-residue protein sequence, read N- to C-terminus: Nonribosomal peptide synthetase imqB (3332 aa).

The segment at 230 to 622 (FSEQVKAHPG…IGRKDTQVKV (393 aa)) is adenylation 1. Residues 764 to 846 (GRITPQEKLL…DMARCITRVD (83 aa)) form the Carrier 1 domain. Serine 801 bears the O-(pantetheine 4'-phosphoryl)serine mark. A condensation 1 region spans residues 886 to 1314 (DIYPCTPLQE…NCLTRKELHQ (429 aa)). An adenylation 2 region spans residues 1336 to 1740 (EVSNTRPTAP…GRKDRQLKVR (405 aa)). The region spanning 1880 to 1954 (AIATPKEEKL…EMAEKAAETG (75 aa)) is the Carrier 2 domain. O-(pantetheine 4'-phosphoryl)serine is present on serine 1915. The segment at 1992–2402 (EDIYPCTPLQ…CLSEIDTQQI (411 aa)) is condensation 2. The adenylation 3 stretch occupies residues 2422–2819 (AQQAREHPAT…GRKDTQVKIR (398 aa)). Positions 2963–3039 (EVATNDEAAV…DLASRIGRVE (77 aa)) constitute a Carrier 3 domain. Position 3000 is an O-(pantetheine 4'-phosphoryl)serine (serine 3000). The thioesterase (TE) domain stretch occupies residues 3058–3323 (SSNPTLIQGQ…ETTRHIRDFC (266 aa)).

Belongs to the NRP synthetase family.

It functions in the pathway secondary metabolite biosynthesis. In terms of biological role, nonribosomal peptide synthetase; part of the gene cluster that mediates the biosynthesis of imizoquins A to D, tripeptide-derived alkaloids that serve a protective role against oxidative stress that are essential for normal germination. ImqB is a canonical three-module NRPS that assembles the tripeptide backbone of the imizoquins via condensation of Trp, Tyr, and Leu-derived precursors. N-methylation by imqF and phenol oxidation by imqC, followed by cyclization via the FAD-dependent oxidase imqH carry out the three-step transformation of L-tyrosine into tetrahydroisoquinoline. Importantly, this sequence requires the presence of a free amine in the tyrosine moiety, indicating that isoquinoline formation occurs prior to peptide bond formation. The imidazolidin-4-one ring of imizoquins could form following additional oxidation of the methyl-derived bridgehead carbon by imqH. Lastly, O-methylation by imqG and leucine hydroxylation by imqE complete biosynthesis of the imizoquins. The protein is Nonribosomal peptide synthetase imqB of Aspergillus flavus (strain ATCC 200026 / FGSC A1120 / IAM 13836 / NRRL 3357 / JCM 12722 / SRRC 167).